The primary structure comprises 258 residues: Serine protease sp-Eoc49 (258 aa).

Positions 1–18 are cleaved as a signal peptide; that stretch reads MVLIRVLANLLVLQLSYA. The region spanning 25 to 249 is the Peptidase S1 domain; it reads VVGGGECNRN…YTDWIQSIIA (225 aa). N44 carries an N-linked (GlcNAc...) asparagine glycan. A disulfide bridge links C50 with C66. Catalysis depends on H65, which acts as the Charge relay system. N-linked (GlcNAc...) asparagine glycans are attached at residues N79 and N103. D110 serves as the catalytic Charge relay system. Cystine bridges form between C142/C210, C174/C189, and C200/C225. N-linked (GlcNAc...) asparagine glycosylation is present at N154. The active-site Charge relay system is S204. N-linked (GlcNAc...) asparagine glycosylation is present at N251.

The protein belongs to the peptidase S1 family. Snake venom subfamily. Monomer. Expressed by the venom gland.

The protein localises to the secreted. Functionally, snake venom serine protease that may act in the hemostasis system of the prey. The sequence is that of Serine protease sp-Eoc49 from Echis ocellatus (Ocellated saw-scaled viper).